A 635-amino-acid chain; its full sequence is MNSHKKEEWEEISSIGSCNSKSRVLKCRKKNGLIENEKVDIVAVKIINKKFFKRNETDILEKIRLFNIPRYYSHAEDDNYIYIYMEYIEDKKQLRFKESEIISMIADLTETLSFLHKHQILHRDIKPSNIILDKNGVLKLIDFGSSIIDQQQDDGDNICKESSFAITGTHTYMAPEVKKLHRSTKKSDVWSLGCTVLEIVGGNPKKIFDGIPIIPNHVSEIMVDFIKRCLIIDPNKRSHMEELLTHRLISSMVGQNKNRENNIEPKFNNDYLSSKFPERFAPRFEKPKWEIEFNELKFNKDDTVGGDGFFSVVKKGYYNETEVAIKLIKKAHGENVTVCDTFYHEVLIISNLRHPNIVQFIAACIKFDNKEVNHCIVSEWMSGGNLSQFISNERKILEINPHLRVKILLDIAKGMLYSHRQGIIHRDLTSNNVLLNFRKKKLLNNNSSNNDEQFYDSDEIIAKVCDFGLSSNQSESKKLRGGSIHYMAPENLNGSPINEKSDIYSFGLLVWQMFSYASPNTIYSPKEMASMVSDEKLNYRPQIPFNVPLKFKELITQCWDRNPLNRPKDFSEIIDKLKDINQIYFQDNSNASTISSTAITTTISTISISNSGNSSYSTSDDSSTYGSGFYNSGFL.

Protein kinase domains lie at 9 to 249 (WEEI…HRLI) and 299 to 585 (NKDD…QIYF). Residues 15-23 (IGSCNSKSR) and lysine 45 each bind ATP. The active-site Proton acceptor is the aspartate 124. Residues 305–313 (GGDGFFSVV) and lysine 326 each bind ATP. Aspartate 427 functions as the Proton acceptor in the catalytic mechanism.

It in the N-terminal section; belongs to the protein kinase superfamily. Ser/Thr protein kinase family. The protein in the C-terminal section; belongs to the protein kinase superfamily. TKL Tyr protein kinase family. In terms of processing, C-terminal tyrosine kinase domain is capable of autophosphorylation, in vitro. As to expression, zakA and zak2 are coexpressed in prestalk cell population, zakA is enriched in pstB populations and zak1 in pstA populations. ZakA and zak2 are coexpressed in prespore cells, zakA expression levels are 10 fold higher than zak2.

It carries out the reaction L-seryl-[protein] + ATP = O-phospho-L-seryl-[protein] + ADP + H(+). It catalyses the reaction L-threonyl-[protein] + ATP = O-phospho-L-threonyl-[protein] + ADP + H(+). The catalysed reaction is L-tyrosyl-[protein] + ATP = O-phospho-L-tyrosyl-[protein] + ADP + H(+). Positive regulator of gsk3/gskA activity required for cell pattern formation and a downstream effector of carC. The kinases, gsk3/gskA, zakA and zak2, form part of a signaling pathway that responds to extracellular cyclic AMP. The pathway has a role in transcriptional regulation; required to direct prespore/spore fates during development. Zak2 negatively regulates prestalk differentiation by regulating expression of ecmA. Phosphorylates Y-214 of gsk3/gskA, in vitro. This chain is Dual specificity protein kinase zak2 (zak2), found in Dictyostelium discoideum (Social amoeba).